We begin with the raw amino-acid sequence, 179 residues long: Acireductone dioxygenase (179 aa).

Positions 97, 99, 103, and 141 each coordinate Fe(2+). Ni(2+) contacts are provided by His-97, His-99, Glu-103, and His-141.

The protein belongs to the acireductone dioxygenase (ARD) family. In terms of assembly, monomer. Fe(2+) serves as cofactor. Ni(2+) is required as a cofactor.

It carries out the reaction 1,2-dihydroxy-5-(methylsulfanyl)pent-1-en-3-one + O2 = 3-(methylsulfanyl)propanoate + CO + formate + 2 H(+). The enzyme catalyses 1,2-dihydroxy-5-(methylsulfanyl)pent-1-en-3-one + O2 = 4-methylsulfanyl-2-oxobutanoate + formate + 2 H(+). It participates in amino-acid biosynthesis; L-methionine biosynthesis via salvage pathway; L-methionine from S-methyl-5-thio-alpha-D-ribose 1-phosphate: step 5/6. Catalyzes 2 different reactions between oxygen and the acireductone 1,2-dihydroxy-3-keto-5-methylthiopentene (DHK-MTPene) depending upon the metal bound in the active site. Fe-containing acireductone dioxygenase (Fe-ARD) produces formate and 2-keto-4-methylthiobutyrate (KMTB), the alpha-ketoacid precursor of methionine in the methionine recycle pathway. Ni-containing acireductone dioxygenase (Ni-ARD) produces methylthiopropionate, carbon monoxide and formate, and does not lie on the methionine recycle pathway. In Granulibacter bethesdensis (strain ATCC BAA-1260 / CGDNIH1), this protein is Acireductone dioxygenase.